The sequence spans 455 residues: 23S rRNA (uracil(1939)-C(5))-methyltransferase RlmD (455 aa).

The TRAM domain occupies 12-70 (SKQLSAKLSLSVTQLDHLGAGIAQHQGKIVFIPGVLPGETATVQFVEQKKSYAKAKLIS). Cys83, Cys89, Cys92, and Cys174 together coordinate [4Fe-4S] cluster. S-adenosyl-L-methionine is bound by residues Gln288, Phe317, Asn322, Glu338, Asp365, and Asp385. Cys411 functions as the Nucleophile in the catalytic mechanism.

The protein belongs to the class I-like SAM-binding methyltransferase superfamily. RNA M5U methyltransferase family. RlmD subfamily.

The enzyme catalyses uridine(1939) in 23S rRNA + S-adenosyl-L-methionine = 5-methyluridine(1939) in 23S rRNA + S-adenosyl-L-homocysteine + H(+). Its function is as follows. Catalyzes the formation of 5-methyl-uridine at position 1939 (m5U1939) in 23S rRNA. The polypeptide is 23S rRNA (uracil(1939)-C(5))-methyltransferase RlmD (Shewanella frigidimarina (strain NCIMB 400)).